The sequence spans 111 residues: Phosphoribosyl-ATP pyrophosphatase (111 aa).

The protein belongs to the PRA-PH family.

It localises to the cytoplasm. It carries out the reaction 1-(5-phospho-beta-D-ribosyl)-ATP + H2O = 1-(5-phospho-beta-D-ribosyl)-5'-AMP + diphosphate + H(+). The protein operates within amino-acid biosynthesis; L-histidine biosynthesis; L-histidine from 5-phospho-alpha-D-ribose 1-diphosphate: step 2/9. The sequence is that of Phosphoribosyl-ATP pyrophosphatase (hisE) from Pseudomonas aeruginosa (strain ATCC 15692 / DSM 22644 / CIP 104116 / JCM 14847 / LMG 12228 / 1C / PRS 101 / PAO1).